Here is a 137-residue protein sequence, read N- to C-terminus: Large ribosomal subunit protein uL16 (137 aa).

It belongs to the universal ribosomal protein uL16 family. Part of the 50S ribosomal subunit.

Binds 23S rRNA and is also seen to make contacts with the A and possibly P site tRNAs. This Wolbachia sp. subsp. Brugia malayi (strain TRS) protein is Large ribosomal subunit protein uL16.